Here is a 203-residue protein sequence, read N- to C-terminus: Recombination protein RecR (203 aa).

The C4-type zinc-finger motif lies at 58–73 (CDYCGNLDIVSICNIC). The Toprim domain maps to 81-177 (STIAVVESVA…KISKLASGIP (97 aa)).

Belongs to the RecR family.

In terms of biological role, may play a role in DNA repair. It seems to be involved in an RecBC-independent recombinational process of DNA repair. It may act with RecF and RecO. The chain is Recombination protein RecR from Orientia tsutsugamushi (strain Ikeda) (Rickettsia tsutsugamushi).